We begin with the raw amino-acid sequence, 481 residues long: Argininosuccinate lyase (481 aa).

The protein belongs to the lyase 1 family. Argininosuccinate lyase subfamily.

It is found in the cytoplasm. The enzyme catalyses 2-(N(omega)-L-arginino)succinate = fumarate + L-arginine. The protein operates within amino-acid biosynthesis; L-arginine biosynthesis; L-arginine from L-ornithine and carbamoyl phosphate: step 3/3. In Methanococcus maripaludis (strain C7 / ATCC BAA-1331), this protein is Argininosuccinate lyase.